A 300-amino-acid polypeptide reads, in one-letter code: B3 domain-containing protein At5g57720 (300 aa).

Residues Pro-11–Gly-105 constitute a DNA-binding region (TF-B3). The tract at residues Lys-115–Glu-142 is disordered. Residues Ile-119–Asp-129 show a composition bias toward acidic residues.

Its subcellular location is the nucleus. This chain is B3 domain-containing protein At5g57720, found in Arabidopsis thaliana (Mouse-ear cress).